We begin with the raw amino-acid sequence, 255 residues long: tRNA (guanine-N(7)-)-methyltransferase (255 aa).

Residues glutamate 64, glutamate 89, aspartate 116, and aspartate 138 each contribute to the S-adenosyl-L-methionine site. Residue aspartate 138 is part of the active site. Residues lysine 142, aspartate 174, and 212–215 each bind substrate; that span reads TRYE.

This sequence belongs to the class I-like SAM-binding methyltransferase superfamily. TrmB family.

The catalysed reaction is guanosine(46) in tRNA + S-adenosyl-L-methionine = N(7)-methylguanosine(46) in tRNA + S-adenosyl-L-homocysteine. It participates in tRNA modification; N(7)-methylguanine-tRNA biosynthesis. In terms of biological role, catalyzes the formation of N(7)-methylguanine at position 46 (m7G46) in tRNA. The protein is tRNA (guanine-N(7)-)-methyltransferase of Rhodospirillum rubrum (strain ATCC 11170 / ATH 1.1.1 / DSM 467 / LMG 4362 / NCIMB 8255 / S1).